A 469-amino-acid chain; its full sequence is Adenosylhomocysteinase (469 aa).

3 residues coordinate substrate: T63, D139, and E164. 165 to 167 (TTT) provides a ligand contact to NAD(+). Substrate contacts are provided by K194 and D198. NAD(+) contacts are provided by residues N199, 228–233 (GYGDVG), E251, N300, 321–323 (IGH), and N375.

This sequence belongs to the adenosylhomocysteinase family. It depends on NAD(+) as a cofactor.

It is found in the cytoplasm. It catalyses the reaction S-adenosyl-L-homocysteine + H2O = L-homocysteine + adenosine. Its pathway is amino-acid biosynthesis; L-homocysteine biosynthesis; L-homocysteine from S-adenosyl-L-homocysteine: step 1/1. Its function is as follows. May play a key role in the regulation of the intracellular concentration of adenosylhomocysteine. This Pseudomonas syringae pv. syringae (strain B728a) protein is Adenosylhomocysteinase.